Reading from the N-terminus, the 430-residue chain is Protein IQ-DOMAIN 3 (430 aa).

Positions 1–36 are disordered; it reads MGKSWFSAVKKALSPEPKQKKEQKPHKSKKWFGKSK. The Nuclear localization signal 1 signature appears at 9–16; it reads VKKALSPE. Residues 23–35 are compositionally biased toward basic residues; sequence QKPHKSKKWFGKS. Residues 107–135 enclose the IQ domain; sequence EEIAAIKIQTAFRGYMARRALRALRGLVR. The stretch at 170 to 224 forms a coiled coil; that stretch reads RLRLSEDKQALTRQLQQKHNKDFDKTGENWNDSTLSREKVEANMLNKQVATMRRE. Positions 213–231 are calmodulin-binding; it reads MLNKQVATMRREKALAYAF. Disordered stretches follow at residues 271–368 and 385–430; these read ENHS…SQSV and SNLS…TNLA. Residues 286–295 show a composition bias toward low complexity; the sequence is ARSVASRAMS. Polar residues predominate over residues 326–340; the sequence is SEDSNSIVSFQSEQP. A Nuclear localization signal 2 motif is present at residues 396-403; it reads AKKRLSFS.

The protein belongs to the IQD family. Binds to multiple calmodulin (CaM) in the presence of Ca(2+) and CaM-like proteins.

The protein localises to the nucleus. The protein resides in the nucleolus. Its subcellular location is the cytoplasm. It is found in the cytoskeleton. In terms of biological role, may be involved in cooperative interactions with calmodulins or calmodulin-like proteins. Recruits calmodulin proteins to microtubules, thus being a potential scaffold in cellular signaling and trafficking. May associate with nucleic acids and regulate gene expression at the transcriptional or post-transcriptional level. This is Protein IQ-DOMAIN 3 from Arabidopsis thaliana (Mouse-ear cress).